Here is a 464-residue protein sequence, read N- to C-terminus: Major capsid protein (464 aa).

Belongs to the NCLDV major capsid protein family. Homotrimer. Post-translationally, the N-terminus is blocked.

It localises to the virion. Major capsid protein that self assembles to form an icosahedral capsid. Represents around 50% of the total virion protein mass. This Tipula (TIV) protein is Major capsid protein (MCP).